A 110-amino-acid chain; its full sequence is ATP-dependent Clp protease adapter protein ClpS 2 (110 aa).

The interval 1–24 (MSNDENRSGSPTGPNTSVITKVKP) is disordered. The segment covering 8 to 19 (SGSPTGPNTSVI) has biased composition (polar residues).

The protein belongs to the ClpS family. As to quaternary structure, binds to the N-terminal domain of the chaperone ClpA.

Its function is as follows. Involved in the modulation of the specificity of the ClpAP-mediated ATP-dependent protein degradation. The chain is ATP-dependent Clp protease adapter protein ClpS 2 from Bradyrhizobium diazoefficiens (strain JCM 10833 / BCRC 13528 / IAM 13628 / NBRC 14792 / USDA 110).